The chain runs to 401 residues: Adenylosuccinate synthetase (401 aa).

Residues 12-18 (GDEGKGK) and 40-42 (GHT) contribute to the GTP site. The Proton acceptor role is filled by Asp13. Mg(2+) is bound by residues Asp13 and Gly40. IMP-binding positions include 13–16 (DEGK), 38–41 (NAGH), Thr128, Arg142, Gln212, Thr227, and Arg290. Catalysis depends on His41, which acts as the Proton donor. 286-292 (ATTRRPR) is a binding site for substrate. Residues Arg292, 318–320 (KAD), and 390–392 (STG) each bind GTP.

Belongs to the adenylosuccinate synthetase family. Homodimer. Mg(2+) serves as cofactor.

It is found in the cytoplasm. It catalyses the reaction IMP + L-aspartate + GTP = N(6)-(1,2-dicarboxyethyl)-AMP + GDP + phosphate + 2 H(+). The protein operates within purine metabolism; AMP biosynthesis via de novo pathway; AMP from IMP: step 1/2. In terms of biological role, plays an important role in the de novo pathway of purine nucleotide biosynthesis. Catalyzes the first committed step in the biosynthesis of AMP from IMP. The chain is Adenylosuccinate synthetase from Pseudothermotoga lettingae (strain ATCC BAA-301 / DSM 14385 / NBRC 107922 / TMO) (Thermotoga lettingae).